We begin with the raw amino-acid sequence, 37 residues long: Cytochrome b6-f complex subunit 5 (37 aa).

A helical membrane pass occupies residues 5–25; that stretch reads LLSGIVLGLIPITLLGLFVTA.

It belongs to the PetG family. In terms of assembly, the 4 large subunits of the cytochrome b6-f complex are cytochrome b6, subunit IV (17 kDa polypeptide, PetD), cytochrome f and the Rieske protein, while the 4 small subunits are PetG, PetL, PetM and PetN. The complex functions as a dimer.

The protein localises to the plastid. It localises to the chloroplast thylakoid membrane. Component of the cytochrome b6-f complex, which mediates electron transfer between photosystem II (PSII) and photosystem I (PSI), cyclic electron flow around PSI, and state transitions. PetG is required for either the stability or assembly of the cytochrome b6-f complex. In Marchantia polymorpha (Common liverwort), this protein is Cytochrome b6-f complex subunit 5.